The primary structure comprises 364 residues: Histidinol-phosphate aminotransferase (364 aa).

Residue lysine 222 is modified to N6-(pyridoxal phosphate)lysine.

It belongs to the class-II pyridoxal-phosphate-dependent aminotransferase family. Histidinol-phosphate aminotransferase subfamily. Homodimer. It depends on pyridoxal 5'-phosphate as a cofactor.

The enzyme catalyses L-histidinol phosphate + 2-oxoglutarate = 3-(imidazol-4-yl)-2-oxopropyl phosphate + L-glutamate. It functions in the pathway amino-acid biosynthesis; L-histidine biosynthesis; L-histidine from 5-phospho-alpha-D-ribose 1-diphosphate: step 7/9. In Brevibacillus brevis (strain 47 / JCM 6285 / NBRC 100599), this protein is Histidinol-phosphate aminotransferase.